The following is a 320-amino-acid chain: Thiamine thiazole synthase (320 aa).

Substrate-binding positions include Cys-82, 103-104 (EA), Gly-111, and Val-176. Cys-209 carries the 2,3-didehydroalanine (Cys) modification. Substrate contacts are provided by residues Asp-211, His-226, Met-278, and 288–290 (RMG).

The protein belongs to the THI4 family. As to quaternary structure, homooctamer. Requires Fe cation as cofactor. During the catalytic reaction, a sulfide is transferred from Cys-209 to a reaction intermediate, generating a dehydroalanine residue.

The protein resides in the cytoplasm. It localises to the nucleus. The catalysed reaction is [ADP-thiazole synthase]-L-cysteine + glycine + NAD(+) = [ADP-thiazole synthase]-dehydroalanine + ADP-5-ethyl-4-methylthiazole-2-carboxylate + nicotinamide + 3 H2O + 2 H(+). In terms of biological role, involved in biosynthesis of the thiamine precursor thiazole. Catalyzes the conversion of NAD and glycine to adenosine diphosphate 5-(2-hydroxyethyl)-4-methylthiazole-2-carboxylic acid (ADT), an adenylated thiazole intermediate. The reaction includes an iron-dependent sulfide transfer from a conserved cysteine residue of the protein to a thiazole intermediate. The enzyme can only undergo a single turnover, which suggests it is a suicide enzyme. May have additional roles in adaptation to various stress conditions and in DNA damage tolerance. The chain is Thiamine thiazole synthase (sti35) from Fusarium oxysporum f. sp. lycopersici (strain 4287 / CBS 123668 / FGSC 9935 / NRRL 34936) (Fusarium vascular wilt of tomato).